The sequence spans 311 residues: Serine/threonine-protein phosphatase 4 catalytic subunit A (311 aa).

Positions 58, 60, 86, and 118 each coordinate Mn(2+). H119 acts as the Proton donor in catalysis. Mn(2+) contacts are provided by H168 and H242. L311 is modified (leucine methyl ester).

This sequence belongs to the PPP phosphatase family. PP-4 (PP-X) subfamily. Serine/threonine-protein phosphatase 4 (PP4) occurs in different assemblies of the catalytic and one or more regulatory subunits. The cofactor is Mn(2+).

Its subcellular location is the cytoplasm. It is found in the cytoskeleton. The protein localises to the microtubule organizing center. The protein resides in the centrosome. It carries out the reaction O-phospho-L-seryl-[protein] + H2O = L-seryl-[protein] + phosphate. It catalyses the reaction O-phospho-L-threonyl-[protein] + H2O = L-threonyl-[protein] + phosphate. Functionally, protein phosphatase that regulates many processes such as microtubule organization at centrosomes. The sequence is that of Serine/threonine-protein phosphatase 4 catalytic subunit A (ppp4ca) from Danio rerio (Zebrafish).